The primary structure comprises 518 residues: Cytochrome P450 monooxygenase psoD (518 aa).

Cysteine 442 contributes to the heme binding site.

It belongs to the cytochrome P450 family. Heme is required as a cofactor.

The protein operates within secondary metabolite biosynthesis. Functionally, cytochrome P450 monooxygenase; part of the gene cluster that mediates the biosynthesis of pseurotin A, a competitive inhibitor of chitin synthase and an inducer of nerve-cell proliferation. The PKS-NRPS hybrid synthetase psoA is responsible for the biosynthesis of azaspirene, one of the first intermediates having the 1-oxa-7-azaspiro[4,4]-non-2-ene-4,6-dione core of pseurotin, via condensation of one acetyl-CoA, 4 malonyl-CoA, and a L-phenylalanine molecule. The dual-functional monooxygenase/methyltransferase psoF seems to be involved in the addition of the C3 methyl group onto the pseurotin scaffold. Azaspirene is then converted to synerazol through 4 steps including oxidation of C17 by the cytochrome P450 monooxygenase psoD, O-methylation of the hydroxy group of C8 by the methyltransferase psoC, and the trans-to-cis isomerization of the C13 olefin by the glutathione S-transferase psoE. The fourth step of synerazol production is performed by the dual-functional monooxygenase/methyltransferase psoF which seems to catalyze the epoxidation of the intermediate deepoxy-synerazol. Synerazol can be attacked by a water molecule nonenzymatically at two different positions to yield two diol products, pseurotin A and pseurotin D. This is Cytochrome P450 monooxygenase psoD from Aspergillus fumigatus (strain ATCC MYA-4609 / CBS 101355 / FGSC A1100 / Af293) (Neosartorya fumigata).